The primary structure comprises 139 residues: MKKGVLLNSEISAVISQLGHTDQITIGDAGLPIPSLAQRIDLALTQGIPSFISVLNVVTQEMQIEAAFLAEEIIGHNPLIHQLILTQIKELEKQQGNSITVDYISHNVLKEKTKHSRAVIRTGEHSPYANIILGAGVTF.

His20 acts as the Proton donor in catalysis. Substrate-binding positions include Asp28, His106, and 128-130 (YAN).

This sequence belongs to the RbsD / FucU family. RbsD subfamily. In terms of assembly, homodecamer.

It is found in the cytoplasm. It carries out the reaction beta-D-ribopyranose = beta-D-ribofuranose. It functions in the pathway carbohydrate metabolism; D-ribose degradation; D-ribose 5-phosphate from beta-D-ribopyranose: step 1/2. Catalyzes the interconversion of beta-pyran and beta-furan forms of D-ribose. The chain is D-ribose pyranase from Photorhabdus laumondii subsp. laumondii (strain DSM 15139 / CIP 105565 / TT01) (Photorhabdus luminescens subsp. laumondii).